The primary structure comprises 385 residues: Succinate--CoA ligase [ADP-forming] subunit beta (385 aa).

Residues 9–244 enclose the ATP-grasp domain; the sequence is KALFRTFGVP…LDEEDPLEVE (236 aa). Residues Lys-46, 53–55, Glu-99, Gln-102, and Glu-107 contribute to the ATP site; that span reads GRG. 2 residues coordinate Mg(2+): Asn-199 and Asp-213. Substrate is bound by residues Asn-264 and 321-323; that span reads GIL.

Belongs to the succinate/malate CoA ligase beta subunit family. As to quaternary structure, heterotetramer of two alpha and two beta subunits. It depends on Mg(2+) as a cofactor.

It carries out the reaction succinate + ATP + CoA = succinyl-CoA + ADP + phosphate. The enzyme catalyses GTP + succinate + CoA = succinyl-CoA + GDP + phosphate. It participates in carbohydrate metabolism; tricarboxylic acid cycle; succinate from succinyl-CoA (ligase route): step 1/1. Its function is as follows. Succinyl-CoA synthetase functions in the citric acid cycle (TCA), coupling the hydrolysis of succinyl-CoA to the synthesis of either ATP or GTP and thus represents the only step of substrate-level phosphorylation in the TCA. The beta subunit provides nucleotide specificity of the enzyme and binds the substrate succinate, while the binding sites for coenzyme A and phosphate are found in the alpha subunit. The protein is Succinate--CoA ligase [ADP-forming] subunit beta of Desulforapulum autotrophicum (strain ATCC 43914 / DSM 3382 / VKM B-1955 / HRM2) (Desulfobacterium autotrophicum).